Consider the following 66-residue polypeptide: MKNGTVKWFNADKGYGFITGEDGNDVFVHFSAIQTDGFKTLEEGQKVTFDEESSDRGPQAANVVPQ.

One can recognise a CSD domain in the interval 4–63 (GTVKWFNADKGYGFITGEDGNDVFVHFSAIQTDGFKTLEEGQKVTFDEESSDRGPQAANV). The segment at 47–66 (VTFDEESSDRGPQAANVVPQ) is disordered.

It is found in the cytoplasm. The sequence is that of Cold shock protein 1 (csp) from Lactiplantibacillus plantarum (strain ATCC BAA-793 / NCIMB 8826 / WCFS1) (Lactobacillus plantarum).